The chain runs to 438 residues: Flagellum-specific ATP synthase (438 aa).

The interval 119-139 (GLSPVSTEQSPPNPMKRPPIR) is disordered. Residue 165–172 (AGSGVGKS) participates in ATP binding.

Belongs to the ATPase alpha/beta chains family.

Its subcellular location is the cytoplasm. It catalyses the reaction ATP + H2O + 4 H(+)(in) = ADP + phosphate + 5 H(+)(out). Its function is as follows. Probable catalytic subunit of a protein translocase for flagellum-specific export, or a proton translocase involved in local circuits at the flagellum. This is Flagellum-specific ATP synthase (fliI) from Bacillus subtilis (strain 168).